A 282-amino-acid polypeptide reads, in one-letter code: Energy-coupling factor transporter ATP-binding protein EcfA1 (282 aa).

The ABC transporter domain maps to 6–243 (ISFDHVTFTY…VEMLKRIGLD (238 aa)). 40–47 (GHNGSGKS) lines the ATP pocket.

The protein belongs to the ABC transporter superfamily. Energy-coupling factor EcfA family. As to quaternary structure, forms a stable energy-coupling factor (ECF) transporter complex composed of 2 membrane-embedded substrate-binding proteins (S component), 2 ATP-binding proteins (A component) and 2 transmembrane proteins (T component).

Its subcellular location is the cell membrane. Functionally, ATP-binding (A) component of a common energy-coupling factor (ECF) ABC-transporter complex. Unlike classic ABC transporters this ECF transporter provides the energy necessary to transport a number of different substrates. The sequence is that of Energy-coupling factor transporter ATP-binding protein EcfA1 from Lactobacillus delbrueckii subsp. bulgaricus (strain ATCC 11842 / DSM 20081 / BCRC 10696 / JCM 1002 / NBRC 13953 / NCIMB 11778 / NCTC 12712 / WDCM 00102 / Lb 14).